We begin with the raw amino-acid sequence, 110 residues long: UPF0339 protein YegP (110 aa).

2 tandem repeats follow at residues 10 to 58 (SSDN…RYEK) and 61 to 109 (ASNG…VKDN).

It belongs to the UPF0339 family. Duplicated subfamily.

In Escherichia coli (strain K12), this protein is UPF0339 protein YegP (yegP).